Reading from the N-terminus, the 339-residue chain is 2-keto-3-deoxygluconate permease (339 aa).

Transmembrane regions (helical) follow at residues 10 to 30 (IPGG…TFAP), 42 to 62 (GLIS…GASI), 77 to 97 (LVVT…RILP), 100 to 120 (GVEV…AMDM), 141 to 161 (AFVL…LGTA), 163 to 183 (IASF…VGFA), 199 to 219 (VQTL…LSVI), 224 to 244 (LLGV…LIVA), 254 to 274 (TAGI…VLIA), and 289 to 309 (TLVA…TAMW). A disordered region spans residues 315–339 (GGDGTVPKEDAVEEKAEQQRRRIIK). Over residues 320 to 339 (VPKEDAVEEKAEQQRRRIIK) the composition is skewed to basic and acidic residues.

Belongs to the KdgT transporter family.

Its subcellular location is the cell inner membrane. The catalysed reaction is 2-dehydro-3-deoxy-D-gluconate(in) + H(+)(in) = 2-dehydro-3-deoxy-D-gluconate(out) + H(+)(out). Its activity is regulated as follows. Uptake is inhibited by the protonophore uncouplers carbonyl cyanide m-chlorophenylhydrazone (CCCP) and 2,4-dinitrophenol, and by NaN(3). Its function is as follows. Catalyzes the proton-dependent uptake of 2-keto-3-deoxygluconate (KDG) into the cell. Can also mediate the uptake of glucuronate with a low affinity, and may mediate the uptake of 5-keto-4-deoxyuronate (DKI) and 2,5-diketo-3-deoxygluconate (DKII), which are intermediates in pectin degradation. In Dickeya chrysanthemi (Pectobacterium chrysanthemi), this protein is 2-keto-3-deoxygluconate permease.